Consider the following 583-residue polypeptide: L-galactono-1,4-lactone dehydrogenase 2, mitochondrial (583 aa).

The transit peptide at 1–36 (MRRLLLAGILRRASSSPSSHHHLHLVRALSASSPLP) directs the protein to the mitochondrion. The propeptide at 37-78 (ASDADLRKYAGYALLLLGCGAATYYSFPLPPDALHKKAVPFK) is removed in mature form. The chain crosses the membrane as a helical span at residues 45 to 61 (YAGYALLLLGCGAATYY). One can recognise an FAD-binding PCMH-type domain in the interval 95 to 266 (THEVHTRVLL…AEVTLQCVER (172 aa)).

Requires FAD as cofactor.

It localises to the mitochondrion membrane. It carries out the reaction L-galactono-1,4-lactone + 4 Fe(III)-[cytochrome c] = L-dehydroascorbate + 4 Fe(II)-[cytochrome c] + 5 H(+). It functions in the pathway cofactor biosynthesis; L-ascorbate biosynthesis. Its function is as follows. Involved in the biosynthesis of ascorbic acid. In Oryza sativa subsp. japonica (Rice), this protein is L-galactono-1,4-lactone dehydrogenase 2, mitochondrial (GLDH2).